A 164-amino-acid polypeptide reads, in one-letter code: Phosphopantetheine adenylyltransferase (164 aa).

S9 is a substrate binding site. Residues S9–F10 and H17 each bind ATP. Residues K41, L73, and K87 each contribute to the substrate site. ATP is bound by residues G88–R90, E98, and Y122–S128.

The protein belongs to the bacterial CoaD family. In terms of assembly, homohexamer. Mg(2+) serves as cofactor.

The protein resides in the cytoplasm. The catalysed reaction is (R)-4'-phosphopantetheine + ATP + H(+) = 3'-dephospho-CoA + diphosphate. Its pathway is cofactor biosynthesis; coenzyme A biosynthesis; CoA from (R)-pantothenate: step 4/5. In terms of biological role, reversibly transfers an adenylyl group from ATP to 4'-phosphopantetheine, yielding dephospho-CoA (dPCoA) and pyrophosphate. In Rhodococcus jostii (strain RHA1), this protein is Phosphopantetheine adenylyltransferase.